The chain runs to 92 residues: UPF0223 protein SERP0684 (92 aa).

The protein belongs to the UPF0223 family.

In Staphylococcus epidermidis (strain ATCC 35984 / DSM 28319 / BCRC 17069 / CCUG 31568 / BM 3577 / RP62A), this protein is UPF0223 protein SERP0684.